A 161-amino-acid polypeptide reads, in one-letter code: uncharacterized protein (161 aa).

This is an uncharacterized protein from Sinorhizobium fredii (strain NBRC 101917 / NGR234).